The following is a 587-amino-acid chain: GTPase-activating protein skywalker (587 aa).

A 1,2-diacyl-sn-glycero-3-phospho-(1D-myo-inositol) contacts are provided by lysine 75 and arginine 79. Residues 84 to 275 (PINSPIRAQL…RIMDCYFHEG (192 aa)) enclose the Rab-GAP TBC domain. A 1,2-diacyl-sn-glycero-3-phospho-(1D-myo-inositol) contacts are provided by residues lysine 277, arginine 281, and 335–339 (RGLST). Residues 408-585 (TWTDRQFLFT…IRVLEVYGFV (178 aa)) form the TLDc domain.

Detected in the larval ventral nerve cord and neuromuscular junction boutons (at protein level).

The protein resides in the cytoplasmic vesicle. The protein localises to the secretory vesicle. Its subcellular location is the synaptic vesicle membrane. It is found in the endosome membrane. In terms of biological role, GTPase-activating protein (GAP) for Rab35 which regulates synaptic vesicle (SV) protein recycling and turnover at the neuromuscular junction boutons and possibly ventral nerve cord via endosomal trafficking. Inhibits Rab35-mediated endosomal sorting which traffics old or dysfunctional SV proteins through a degradative endolysosomal route that involves the ESCRT pathway and the HOPS complex members dor, vps39 and rab7. This function is essential for preventing excessive degradation and turnover of vesicles from the readily releasable pool which leads to increased neurotransmission and eventually neurodegeneration. Preferentially binds phosphoinositides phosphorylated at the D5 position of the inositol ring, such as phosphatidylinositol 4,5-bisphosphate (PIP2) and phosphatidylinositol 3,4,5-trisphosphate (PIP3). Binding to phosphoinositides and thus membrane-association, is required for its function in regulating the turnover of synaptic-vesicle proteins. It is therefore likely that it is recruited to vesicle membranes with high phosphoinositide content and thereby selectively prevents endolysosomal degradation of these vesicles. This is GTPase-activating protein skywalker from Drosophila melanogaster (Fruit fly).